The chain runs to 560 residues: IQ motif and ankyrin repeat domain-containing protein 1 (560 aa).

The segment at 1 to 72 (MDSKKGRPKA…DRAARAIQGA (72 aa)) is disordered. The IQ domain occupies 62–91 (EDRAARAIQGAFRQLRARRELARRREERRE). ANK repeat units lie at residues 191 to 223 (YGNT…SKGA) and 224 to 253 (FGPT…DPRV). Residues 281–398 (LTEAMLQNME…RLELREQTQE (118 aa)) are a coiled coil.

The chain is IQ motif and ankyrin repeat domain-containing protein 1 from Homo sapiens (Human).